The primary structure comprises 572 residues: Ribonuclease Y (572 aa).

A helical membrane pass occupies residues 1-21; the sequence is MPTLYVILSLLLGLIGGVLVQ. 2 disordered regions span residues 59–85 and 110–142; these read HEAAEQDRQDAISKTQDAARRVQDAAE and QLEAEREQAKADAAQQREALSTDRQETRRERED. Basic and acidic residues-rich tracts occupy residues 110-119 and 129-142; these read QLEAEREQAK and LSTDRQETRRERED. A KH domain is found at 262–322; the sequence is SVSVVPIPSD…LRREVARHVL (61 aa). Positions 388 to 481 constitute an HD domain; the sequence is VLKHSVQVAH…VAAADAISAA (94 aa).

Belongs to the RNase Y family.

The protein resides in the cell membrane. Its function is as follows. Endoribonuclease that initiates mRNA decay. In Deinococcus radiodurans (strain ATCC 13939 / DSM 20539 / JCM 16871 / CCUG 27074 / LMG 4051 / NBRC 15346 / NCIMB 9279 / VKM B-1422 / R1), this protein is Ribonuclease Y.